The primary structure comprises 515 residues: Galactose-1-phosphate uridylyltransferase (515 aa).

This sequence belongs to the galactose-1-phosphate uridylyltransferase type 2 family.

Its subcellular location is the cytoplasm. The catalysed reaction is alpha-D-galactose 1-phosphate + UDP-alpha-D-glucose = alpha-D-glucose 1-phosphate + UDP-alpha-D-galactose. Its pathway is carbohydrate metabolism; galactose metabolism. Transfers the UMP unit from UDP-glucose (UDP-Glc) to Gal1P. Can also transfer the UMP unit to GlcNAc1P and GalNAc1P. Involved in the general galactose metabolism, and also involved in the lacto-N-biose I/galacto-N-biose (LNB/GNB) degradation pathway, which is important for host intestinal colonization by bifidobacteria. The protein is Galactose-1-phosphate uridylyltransferase of Bifidobacterium longum subsp. longum (strain ATCC 15707 / DSM 20219 / JCM 1217 / NCTC 11818 / E194b).